We begin with the raw amino-acid sequence, 274 residues long: Cytochrome b-c1 complex subunit Rieske, mitochondrial (274 aa).

Residues 79-103 (SHTDIKVPDFSDYRRSEVLDTTKSS) lie on the Mitochondrial matrix side of the membrane. The helical transmembrane segment at 104 to 140 (RESSDARKGFSYLVTATTAVGVTYAAKSIVTQFVSSM) threads the bilayer. Over 141-274 (SASADVLAMS…FTSDDLVIVG (134 aa)) the chain is Mitochondrial intermembrane. In terms of domain architecture, Rieske spans 187-272 (EAAVELSQLR…YEFTSDDLVI (86 aa)). Residues C217, H219, C236, H239, and S241 each coordinate [2Fe-2S] cluster. A disulfide bridge links C222 with C238.

Belongs to the Rieske iron-sulfur protein family. In terms of assembly, component of the ubiquinol-cytochrome c oxidoreductase (cytochrome b-c1 complex, complex III, CIII), a multisubunit enzyme composed of 11 subunits. The complex is composed of 3 respiratory subunits cytochrome b, cytochrome c1 and Rieske protein UQCRFS1, 2 core protein subunits UQCRC1/QCR1 and UQCRC2/QCR2, and 6 low-molecular weight protein subunits UQCRH/QCR6, UQCRB/QCR7, UQCRQ/QCR8, UQCR10/QCR9, UQCR11/QCR10 and subunit 9, the cleavage product of Rieske protein UQCRFS1. The complex exists as an obligatory dimer and forms supercomplexes (SCs) in the inner mitochondrial membrane with NADH-ubiquinone oxidoreductase (complex I, CI) and cytochrome c oxidase (complex IV, CIV), resulting in different assemblies (supercomplex SCI(1)III(2)IV(1) and megacomplex MCI(2)III(2)IV(2)). Incorporation of the Rieske protein UQCRFS1 is the penultimate step in complex III assembly. Interacts with TTC19, which is involved in the clearance of UQCRFS1 fragments. As to quaternary structure, component of the ubiquinol-cytochrome c oxidoreductase (cytochrome b-c1 complex, complex III, CIII). Subunit 9 corresponds to the mitochondrial targeting sequence (MTS) of Rieske protein UQCRFS1. It is retained after processing and incorporated inside complex III, where it remains bound to the complex and localizes between the 2 core subunits UQCRC1/QCR1 and UQCRC2/QCR2. The cofactor is [2Fe-2S] cluster. Post-translationally, proteolytic processing is necessary for the correct insertion of UQCRFS1 in the complex III dimer. Several fragments are generated during UQCRFS1 insertion, most probably due to the endogenous matrix-processing peptidase (MPP) activity of the 2 core protein subunits UQCRC1/QCR1 and UQCRC2/QCR2, which are homologous to the 2 mitochondrial-processing peptidase (MPP) subunits beta-MPP and alpha-MPP respectively. The action of the protease is also necessary for the clearance of the UQCRFS1 fragments.

The protein localises to the mitochondrion inner membrane. The catalysed reaction is a quinol + 2 Fe(III)-[cytochrome c](out) = a quinone + 2 Fe(II)-[cytochrome c](out) + 2 H(+)(out). Its function is as follows. Component of the ubiquinol-cytochrome c oxidoreductase, a multisubunit transmembrane complex that is part of the mitochondrial electron transport chain which drives oxidative phosphorylation. The respiratory chain contains 3 multisubunit complexes succinate dehydrogenase (complex II, CII), ubiquinol-cytochrome c oxidoreductase (cytochrome b-c1 complex, complex III, CIII) and cytochrome c oxidase (complex IV, CIV), that cooperate to transfer electrons derived from NADH and succinate to molecular oxygen, creating an electrochemical gradient over the inner membrane that drives transmembrane transport and the ATP synthase. The cytochrome b-c1 complex catalyzes electron transfer from ubiquinol to cytochrome c, linking this redox reaction to translocation of protons across the mitochondrial inner membrane, with protons being carried across the membrane as hydrogens on the quinol. In the process called Q cycle, 2 protons are consumed from the matrix, 4 protons are released into the intermembrane space and 2 electrons are passed to cytochrome c. The Rieske protein is a catalytic core subunit containing a [2Fe-2S] iron-sulfur cluster. It cycles between 2 conformational states during catalysis to transfer electrons from the quinol bound in the Q(0) site in cytochrome b to cytochrome c1. Incorporation of UQCRFS1 is the penultimate step in complex III assembly. Functionally, component of the ubiquinol-cytochrome c oxidoreductase (cytochrome b-c1 complex, complex III, CIII). UQCRFS1 undergoes proteolytic processing once it is incorporated in the complex III dimer. One of the fragments, called subunit 9, corresponds to its mitochondrial targeting sequence (MTS). The proteolytic processing is necessary for the correct insertion of UQCRFS1 in the complex III dimer, but the persistence of UQCRFS1-derived fragments may prevent newly imported UQCRFS1 to be processed and assembled into complex III and is detrimental for the complex III structure and function. The protein is Cytochrome b-c1 complex subunit Rieske, mitochondrial (UQCRFS1) of Aotus azarae (Azara's night monkey).